A 180-amino-acid polypeptide reads, in one-letter code: MSDAPRGEDAVLVAVQAALAGRPGVLTGARALSHFGEHSAGWVALAAAGALAQPAKRRSWLAVGAGAFLAHAAAVVIKRVVRRERPSHPDIAVNVGTPSRLSFPSAHATSTTAAAVLLAQTTGVPAPALLVPPMALSRLVLGVHYPTDVVTGVVVGALVGKAVGKAAGRISNSVGAEGDR.

A run of 4 helical transmembrane segments spans residues 31–51, 61–81, 116–136, and 139–159; these read ALSH…AGAL, LAVG…KRVV, VLLA…PMAL, and LVLG…GALV.

This sequence belongs to the PA-phosphatase related phosphoesterase family.

It localises to the cell membrane. The enzyme catalyses trans,octa-cis-decaprenylphospho-beta-D-ribofuranose 5-phosphate + H2O = trans,octa-cis-decaprenylphospho-beta-D-ribofuranose + phosphate. It participates in cell wall biogenesis; cell wall polysaccharide biosynthesis. Phosphatase involved in the biosynthesis of decaprenylphosphoryl arabinose (DPA), which serves as the arabinose donor for the biosynthesis of arabinogalactan, the major mycobacterial cell wall polysaccharide. Catalyzes the dephosphorylation of decaprenylphosphoryl-5-phosphoribose (DPPR) to decaprenyl-phosphoribose (DPR). This chain is Decaprenylphosphoryl-5-phosphoribose phosphatase, found in Mycolicibacterium smegmatis (strain ATCC 700084 / mc(2)155) (Mycobacterium smegmatis).